The sequence spans 623 residues: Indolepyruvate oxidoreductase subunit IorA (623 aa).

[4Fe-4S] cluster contacts are provided by C573, C576, C579, C585, C602, C605, C608, and C612. The 4Fe-4S ferredoxin-type domain occupies 593–622 (EKVSIDQSLCVGCAVCAKICPNRAIKPAKS).

Heterodimer of the IorA and IorB subunits. [4Fe-4S] cluster serves as cofactor.

The catalysed reaction is indole-3-pyruvate + 2 oxidized [2Fe-2S]-[ferredoxin] + CoA = (indol-3-yl)acetyl-CoA + 2 reduced [2Fe-2S]-[ferredoxin] + CO2 + H(+). In terms of biological role, catalyzes the ferredoxin-dependent oxidative decarboxylation of arylpyruvates. The protein is Indolepyruvate oxidoreductase subunit IorA (iorA) of Archaeoglobus fulgidus (strain ATCC 49558 / DSM 4304 / JCM 9628 / NBRC 100126 / VC-16).